Reading from the N-terminus, the 118-residue chain is Large ribosomal subunit protein bL20 (118 aa).

This sequence belongs to the bacterial ribosomal protein bL20 family.

Binds directly to 23S ribosomal RNA and is necessary for the in vitro assembly process of the 50S ribosomal subunit. It is not involved in the protein synthesizing functions of that subunit. The protein is Large ribosomal subunit protein bL20 of Edwardsiella ictaluri (strain 93-146).